The following is a 962-amino-acid chain: Replication protein 1a (962 aa).

Residues 71-270 (LQLSKNLCPH…HSWKNIKSFL (200 aa)) form the Alphavirus-like MT domain. Residues 79–356 (PHSFAGAMRQ…EEICFRCPKD (278 aa)) form a methyltransferase region. A disordered region spans residues 536-561 (DVDERPAGTVSGPTIQAPSVTQENTV). Positions 546–561 (SGPTIQAPSVTQENTV) are enriched in polar residues. Positions 667–820 (NKDCVLNNNV…KLSPDSSDQQ (154 aa)) constitute a (+)RNA virus helicase ATP-binding domain. The interval 693 to 941 (LMDGVAGCGK…STKCDLFTDK (249 aa)) is ATP-dependent helicase. The (+)RNA virus helicase C-terminal domain maps to 821 to 962 (IRTFRCPKDV…SRKFRLLFGC (142 aa)).

This sequence belongs to the bromoviridae replication protein 1a family. As to quaternary structure, interacts with RNA-directed RNA polymerase 2a.

The protein resides in the host endoplasmic reticulum membrane. Functionally, involved in the virus replication. Contains a helicase domain and a methyltransferase domain. The methyltransferase domain is probably involved in viral RNA capping. Involved in the formation of ER membrane spherular invaginations in which RNA replication complexes form. This Solanum lycopersicum (Tomato) protein is Replication protein 1a.